The chain runs to 216 residues: Ribose-5-phosphate isomerase A (216 aa).

Substrate is bound by residues 26-29, 79-82, and 92-95; these read TGST, DGAD, and KGGG. The active-site Proton acceptor is the Glu-101. Residue Lys-119 participates in substrate binding.

This sequence belongs to the ribose 5-phosphate isomerase family. Homodimer.

The catalysed reaction is aldehydo-D-ribose 5-phosphate = D-ribulose 5-phosphate. The protein operates within carbohydrate degradation; pentose phosphate pathway; D-ribose 5-phosphate from D-ribulose 5-phosphate (non-oxidative stage): step 1/1. In terms of biological role, catalyzes the reversible conversion of ribose-5-phosphate to ribulose 5-phosphate. This Legionella pneumophila (strain Lens) protein is Ribose-5-phosphate isomerase A.